The chain runs to 155 residues: Transcriptional repressor NrdR (155 aa).

Residues 3–34 fold into a zinc finger; sequence CPFCGNVDTQVKDSRPAEDHVSIRRRRFCPAC. In terms of domain architecture, ATP-cone spans 49–139; sequence LVVIKTNGKR…VYKNFQAADD (91 aa).

It belongs to the NrdR family. Zn(2+) is required as a cofactor.

In terms of biological role, negatively regulates transcription of bacterial ribonucleotide reductase nrd genes and operons by binding to NrdR-boxes. The chain is Transcriptional repressor NrdR from Ruegeria sp. (strain TM1040) (Silicibacter sp.).